We begin with the raw amino-acid sequence, 259 residues long: DNA repair protein RecO (259 aa).

Belongs to the RecO family.

Its function is as follows. Involved in DNA repair and RecF pathway recombination. The sequence is that of DNA repair protein RecO from Rhizobium rhizogenes (strain K84 / ATCC BAA-868) (Agrobacterium radiobacter).